We begin with the raw amino-acid sequence, 667 residues long: Long-chain-fatty-acid--CoA ligase ACSBG2 (667 aa).

ATP contacts are provided by residues 227 to 235, 418 to 423, Asp496, Arg511, and Arg624; these read TSGTTGTPK and EIYGMS.

This sequence belongs to the ATP-dependent AMP-binding enzyme family. Bubblegum subfamily. Testis- and brainstem-specific. Expressed in pubertal and adult testis. Enriched in germ cells and Sertoli cells while present at a lower level in Leydig cells. Present in testicular Sertoli cells and large motoneurons in the medulla oblongata and cervical spinal cord (at protein level).

Its subcellular location is the cytoplasm. The protein localises to the membrane. The catalysed reaction is a long-chain fatty acid + ATP + CoA = a long-chain fatty acyl-CoA + AMP + diphosphate. It catalyses the reaction (5Z,8Z,11Z,14Z)-eicosatetraenoate + ATP + CoA = (5Z,8Z,11Z,14Z)-eicosatetraenoyl-CoA + AMP + diphosphate. It carries out the reaction hexadecanoate + ATP + CoA = hexadecanoyl-CoA + AMP + diphosphate. The enzyme catalyses (9Z)-octadecenoate + ATP + CoA = (9Z)-octadecenoyl-CoA + AMP + diphosphate. The catalysed reaction is (9Z,12Z)-octadecadienoate + ATP + CoA = (9Z,12Z)-octadecadienoyl-CoA + AMP + diphosphate. It catalyses the reaction tetracosanoate + ATP + CoA = tetracosanoyl-CoA + AMP + diphosphate. Catalyzes the conversion of fatty acids such as long chain and very long-chain fatty acids to their active form acyl-CoAs for both synthesis of cellular lipids, and degradation via beta-oxidation. Can activate diverse saturated, monosaturated and polyunsaturated fatty acids. Has increased ability to activate oleic and linoleic acid. May play a role in spermatogenesis. The sequence is that of Long-chain-fatty-acid--CoA ligase ACSBG2 from Mus musculus (Mouse).